The primary structure comprises 480 residues: Cytochrome P450 monooxygenase ORF11 (480 aa).

The chain crosses the membrane as a helical span at residues 9–29 (LLLLPHLSALTPKTGFLIGLA). N-linked (GlcNAc...) asparagine glycosylation is found at N265 and N352. C449 provides a ligand contact to heme.

This sequence belongs to the cytochrome P450 family. It depends on heme as a cofactor.

The protein resides in the membrane. It functions in the pathway sesquiterpene biosynthesis. Its function is as follows. Cytochrome P450 monooxygenase; part of the gene cluster that mediates the biosynthesis of PR-toxin, a bicyclic sesquiterpene belonging to the eremophilane class and acting as a mycotoxin. The first step of the pathway is catalyzed by the aristolochene synthase which performs the cyclization of trans,trans-farnesyl diphosphate (FPP) to the bicyclic sesquiterpene aristolochene. Following the formation of aristolochene, the non-oxygenated aristolochene is converted to the trioxygenated intermediate eremofortin B, via 7-epi-neopetasone. This conversion appears to involve three enzymes, a hydroxysterol oxidase-like enzyme, the quinone-oxidase prx3 that forms the quinone-type-structure in the bicyclic nucleus of aristolochene with the C8-oxo group and the C-3 hydroxyl group, and the P450 monooxygenase ORF6 that introduces the epoxide at the double bond between carbons 1 and 2. No monoxy or dioxy-intermediates have been reported to be released to the broth, so these three early oxidative reactions may be coupled together. Eremofortin B is further oxidized by another P450 monooxygenase, that introduces a second epoxide between carbons 7 and 11 prior to acetylation to eremofortin A by the acetyltransferase ORF8. The second epoxidation may be performed by a second P450 monooxygenase. After the acetylation step, eremofortin A is converted to eremofortin C and then to PR-toxin. First the conversion of eremofortin A to eremofortin C proceeds by oxidation of the side chain of the molecule at C-12 and is catalyzed by the short-chain oxidoreductase prx1. The cytochrome P450 monooxygenase ORF6 is probably also involved in this step. The primary alcohol formed at C-12 is finally oxidized by the short-chain alcohol dehydrogenase prx4 that forms PR-toxin. This Penicillium roqueforti (strain FM164) protein is Cytochrome P450 monooxygenase ORF11.